A 332-amino-acid polypeptide reads, in one-letter code: Lipoyl synthase (332 aa).

The [4Fe-4S] cluster site is built by Cys74, Cys79, Cys85, Cys100, Cys104, Cys107, and Ser314. One can recognise a Radical SAM core domain in the interval 85 to 303 (CFGKGTATFM…EEEAYKMGFT (219 aa)).

The protein belongs to the radical SAM superfamily. Lipoyl synthase family. [4Fe-4S] cluster is required as a cofactor.

The protein localises to the cytoplasm. The enzyme catalyses [[Fe-S] cluster scaffold protein carrying a second [4Fe-4S](2+) cluster] + N(6)-octanoyl-L-lysyl-[protein] + 2 oxidized [2Fe-2S]-[ferredoxin] + 2 S-adenosyl-L-methionine + 4 H(+) = [[Fe-S] cluster scaffold protein] + N(6)-[(R)-dihydrolipoyl]-L-lysyl-[protein] + 4 Fe(3+) + 2 hydrogen sulfide + 2 5'-deoxyadenosine + 2 L-methionine + 2 reduced [2Fe-2S]-[ferredoxin]. It functions in the pathway protein modification; protein lipoylation via endogenous pathway; protein N(6)-(lipoyl)lysine from octanoyl-[acyl-carrier-protein]: step 2/2. Its function is as follows. Catalyzes the radical-mediated insertion of two sulfur atoms into the C-6 and C-8 positions of the octanoyl moiety bound to the lipoyl domains of lipoate-dependent enzymes, thereby converting the octanoylated domains into lipoylated derivatives. The chain is Lipoyl synthase from Paracidovorax citrulli (strain AAC00-1) (Acidovorax citrulli).